Consider the following 674-residue polypeptide: Metal-nicotianamine transporter YSL2 (674 aa).

Residues 1 to 29 (MEAAAPEIERCDAGDVESDHDGAAAAAER) are disordered. The segment covering 7–22 (EIERCDAGDVESDHDG) has biased composition (basic and acidic residues). 14 helical membrane-spanning segments follow: residues 41–61 (GMVAALLIGFVYTVIIMKLAL), 64–84 (GIIPTLNVSAALLAFLALRGW), 118–138 (CAVACYTMGFGGGFGSSLLAL), 162–182 (GVGWMTGFLFAISFVGLLNLL), 224–244 (GFLNCFGISLLWSFFQWFYTG), 283–303 (LVNLSALFGAILSWGIMWPLI), 329–349 (FMCVALIMGDGLYHFIKVTGI), 392–412 (LAYAGYALLSIVAVIAIPIMF), 420–440 (VVVAFVLAPVLGFSNAYGTGL), 452–472 (IALFIFAAWGGRDNGVIAGLV), 506–526 (VGQAIGTAMGCIIAPLTFLLF), 559–579 (SALPKHCLELSAGFFAFSVLI), 604–624 (FLVGANFAIDMCVGSLIVFAW), and 633–653 (ALLVPAVASGFICGDGIWMFP).

It belongs to the YSL (TC 2.A.67.2) family. As to expression, expressed in phloem cells of vascular bundles in leaves and leaf sheaths. Expressed at low levels in phloem companion cells in the central cylinder of roots, but not in the epidermal or cortical cells.

It localises to the cell membrane. In terms of biological role, involved in the phloem transport of iron and manganese and their translocation into the grain. Transports iron- and manganese-nicotianamine chelates, but not iron-phytosiderophore. In Oryza sativa subsp. japonica (Rice), this protein is Metal-nicotianamine transporter YSL2 (YSL2).